A 485-amino-acid chain; its full sequence is MTYLIKGETATWEVVVGLEVHAQVVSQSKLFSGSSTRFGAPANSQVSLVDAAMPGMLPVINGLCVEQAVRTGLGLRAKINKRSIFARKNYFYADLPQGYQISQYEQPIVGEGKVVLDMPDGSSREVGIERLHLEQDAGKSMHDQHPTKSLIDLNRSGVALMEIVSKPDMREPEEAGAYLRKLRSIMRYLGTCDGNMEEGSMRADVNVSVRPIGTTDLRTRCEIKNVNSVRFVMQAIEAEAHRQVEVWESGGEVRQETRLFDPAKGETRSMRSKEHAHDYRYFPDPDLLPLEFDDAFVEKVRRSLPELPDDKKNRFIADFGLTPYDASVLVVDRENAAFFEKVAEGRDGKTAANWVINNLFGALAKAGKGVADSPVSAENLGKLLDLLKDEVINGRIAKDVFEIMMETGEDPDAIVEDKGLRQVTDTSAIEAAVDAVIAANPEKADDVRGGKEKLLGWFVGQVMKATQGKANPAMLNDILRAKLLG.

Belongs to the GatB/GatE family. GatB subfamily. Heterotrimer of A, B and C subunits.

It catalyses the reaction L-glutamyl-tRNA(Gln) + L-glutamine + ATP + H2O = L-glutaminyl-tRNA(Gln) + L-glutamate + ADP + phosphate + H(+). The enzyme catalyses L-aspartyl-tRNA(Asn) + L-glutamine + ATP + H2O = L-asparaginyl-tRNA(Asn) + L-glutamate + ADP + phosphate + 2 H(+). In terms of biological role, allows the formation of correctly charged Asn-tRNA(Asn) or Gln-tRNA(Gln) through the transamidation of misacylated Asp-tRNA(Asn) or Glu-tRNA(Gln) in organisms which lack either or both of asparaginyl-tRNA or glutaminyl-tRNA synthetases. The reaction takes place in the presence of glutamine and ATP through an activated phospho-Asp-tRNA(Asn) or phospho-Glu-tRNA(Gln). This is Aspartyl/glutamyl-tRNA(Asn/Gln) amidotransferase subunit B from Rhodospirillum rubrum (strain ATCC 11170 / ATH 1.1.1 / DSM 467 / LMG 4362 / NCIMB 8255 / S1).